Here is a 1369-residue protein sequence, read N- to C-terminus: Neurofascin (1369 aa).

Positions 1 to 25 are cleaved as a signal peptide; the sequence is MVLHSHQLTYAGIAFALCLHHLISA. Topologically, residues 26 to 1235 are extracellular; the sequence is IEVPLDSNIQ…NHVDIATQGW (1210 aa). 2 consecutive Ig-like C2-type domains span residues 42–138 and 144–231; these read PTIT…LQVS and PKEK…NPYT. 2 cysteine pairs are disulfide-bonded: Cys64/Cys119 and Cys163/Cys214. N-linked (GlcNAc...) asparagine glycans are attached at residues Asn241, Asn247, and Asn323. 4 Ig-like C2-type domains span residues 262-350, 355-442, 448-535, and 539-626; these read PSFM…ISVR, PYWL…AFVS, PRIL…VRLE, and PTRI…AYLT. Intrachain disulfides connect Cys286–Cys334 and Cys376–Cys426. N-linked (GlcNAc...) asparagine glycosylation is found at Asn427, Asn464, and Asn501. 2 cysteine pairs are disulfide-bonded: Cys470–Cys519 and Cys561–Cys610. Fibronectin type-III domains lie at 645 to 740, 745 to 838, 843 to 945, and 949 to 1057; these read RPRD…TSGA, NPTG…SGED, APTD…TPEG, and SPRY…TPAS. N-linked (GlcNAc...) asparagine glycosylation is present at Asn692. Residues 730–739 show a composition bias toward polar residues; it reads MPSERYQTSG. The disordered stretch occupies residues 730–753; sequence MPSERYQTSGARPEINPTGVQGAG. N-linked (GlcNAc...) asparagine glycans are attached at residues Asn767, Asn793, Asn853, Asn994, and Asn1009. The tract at residues 1078–1097 is disordered; it reads TTATPTTETPPTEIPTTAIP. N-linked (GlcNAc...) asparagine glycosylation is found at Asn1133, Asn1150, Asn1156, and Asn1171. A Fibronectin type-III 5 domain is found at 1133 to 1222; that stretch reads NGSSIWDIRA…SYITFTTSSA (90 aa). A helical transmembrane segment spans residues 1236 to 1256; it reads FIGLMCAIALLVLILLIVCFI. At 1257-1369 the chain is on the cytoplasmic side; it reads KRSRGGKYPV…SPVNAIYSLA (113 aa). 2 stretches are compositionally biased toward basic and acidic residues: residues 1266-1282 and 1289-1298; these read VRDNKDEHLNPEDKNVE and RSLESDEDNK. The tract at residues 1266–1369 is disordered; that stretch reads VRDNKDEHLN…SPVNAIYSLA (104 aa). Residues 1300-1313 are compositionally biased toward polar residues; it reads LPNSQTSLDGTIKQ.

It belongs to the immunoglobulin superfamily. L1/neurofascin/NgCAM family. In terms of processing, N-glycosylated and O-glycosylated. May be proteolytically cleaved at Arg-636.

It is found in the cell membrane. In terms of biological role, cell adhesion, ankyrin-binding protein which may be involved in neurite extension, axonal guidance, synaptogenesis, myelination and neuron-glial cell interactions. The sequence is that of Neurofascin (NFASC) from Gallus gallus (Chicken).